The primary structure comprises 293 residues: Pyridoxal 5'-phosphate synthase subunit PdxS (293 aa).

D23 contacts D-ribose 5-phosphate. The active-site Schiff-base intermediate with D-ribose 5-phosphate is K80. G152 is a binding site for D-ribose 5-phosphate. R164 lines the D-glyceraldehyde 3-phosphate pocket. D-ribose 5-phosphate contacts are provided by residues G213 and 234–235; that span reads GS.

The protein belongs to the PdxS/SNZ family. In terms of assembly, in the presence of PdxT, forms a dodecamer of heterodimers.

The catalysed reaction is aldehydo-D-ribose 5-phosphate + D-glyceraldehyde 3-phosphate + L-glutamine = pyridoxal 5'-phosphate + L-glutamate + phosphate + 3 H2O + H(+). Its pathway is cofactor biosynthesis; pyridoxal 5'-phosphate biosynthesis. In terms of biological role, catalyzes the formation of pyridoxal 5'-phosphate from ribose 5-phosphate (RBP), glyceraldehyde 3-phosphate (G3P) and ammonia. The ammonia is provided by the PdxT subunit. Can also use ribulose 5-phosphate and dihydroxyacetone phosphate as substrates, resulting from enzyme-catalyzed isomerization of RBP and G3P, respectively. This Chloroflexus aggregans (strain MD-66 / DSM 9485) protein is Pyridoxal 5'-phosphate synthase subunit PdxS.